The sequence spans 213 residues: V-type ATP synthase subunit D (213 aa).

It belongs to the V-ATPase D subunit family.

Its function is as follows. Produces ATP from ADP in the presence of a proton gradient across the membrane. The polypeptide is V-type ATP synthase subunit D (Clostridium botulinum (strain Alaska E43 / Type E3)).